Reading from the N-terminus, the 432-residue chain is Proline--tRNA ligase (432 aa).

It belongs to the class-II aminoacyl-tRNA synthetase family. ProS type 2 subfamily. Homodimer.

The protein localises to the cytoplasm. The catalysed reaction is tRNA(Pro) + L-proline + ATP = L-prolyl-tRNA(Pro) + AMP + diphosphate. In terms of biological role, catalyzes the attachment of proline to tRNA(Pro) in a two-step reaction: proline is first activated by ATP to form Pro-AMP and then transferred to the acceptor end of tRNA(Pro). The chain is Proline--tRNA ligase from Rickettsia bellii (strain OSU 85-389).